The sequence spans 617 residues: 1-deoxy-D-xylulose-5-phosphate synthase (617 aa).

Residues histidine 76 and 117-119 each bind thiamine diphosphate; that span reads GHS. Residue aspartate 148 coordinates Mg(2+). Thiamine diphosphate contacts are provided by residues 149–150, asparagine 177, tyrosine 285, and glutamate 366; that span reads GA. Asparagine 177 is a binding site for Mg(2+).

The protein belongs to the transketolase family. DXPS subfamily. Homodimer. It depends on Mg(2+) as a cofactor. Thiamine diphosphate serves as cofactor.

It catalyses the reaction D-glyceraldehyde 3-phosphate + pyruvate + H(+) = 1-deoxy-D-xylulose 5-phosphate + CO2. The protein operates within metabolic intermediate biosynthesis; 1-deoxy-D-xylulose 5-phosphate biosynthesis; 1-deoxy-D-xylulose 5-phosphate from D-glyceraldehyde 3-phosphate and pyruvate: step 1/1. In terms of biological role, catalyzes the acyloin condensation reaction between C atoms 2 and 3 of pyruvate and glyceraldehyde 3-phosphate to yield 1-deoxy-D-xylulose-5-phosphate (DXP). In Histophilus somni (strain 129Pt) (Haemophilus somnus), this protein is 1-deoxy-D-xylulose-5-phosphate synthase.